The chain runs to 196 residues: Phosphoheptose isomerase (196 aa).

An SIS domain is found at 34–193 (LIETFKIGNK…EQGLFGIFAG (160 aa)). Substrate is bound at residue 49-51 (NGG). 2 residues coordinate Zn(2+): His-58 and Glu-62. Substrate-binding positions include Glu-62, 91-92 (ND), 117-119 (STS), Ser-122, and Gln-169. Residues Gln-169 and His-177 each contribute to the Zn(2+) site.

It belongs to the SIS family. GmhA subfamily. In terms of assembly, homotetramer. Requires Zn(2+) as cofactor.

It is found in the cytoplasm. The enzyme catalyses 2 D-sedoheptulose 7-phosphate = D-glycero-alpha-D-manno-heptose 7-phosphate + D-glycero-beta-D-manno-heptose 7-phosphate. Its pathway is carbohydrate biosynthesis; D-glycero-D-manno-heptose 7-phosphate biosynthesis; D-glycero-alpha-D-manno-heptose 7-phosphate and D-glycero-beta-D-manno-heptose 7-phosphate from sedoheptulose 7-phosphate: step 1/1. Catalyzes the isomerization of sedoheptulose 7-phosphate in D-glycero-D-manno-heptose 7-phosphate. This is Phosphoheptose isomerase from Trichlorobacter lovleyi (strain ATCC BAA-1151 / DSM 17278 / SZ) (Geobacter lovleyi).